The chain runs to 1040 residues: Multidrug resistance protein MdtB (1040 aa).

A run of 12 helical transmembrane segments spans residues 16–36, 347–367, 369–389, 396–416, 440–460, 472–492, 537–557, 863–883, 888–908, 911–931, 968–988, and 998–1018; these read FIMR…AGII, LMMA…NIPA, IIPG…MVFL, LTLM…IVVI, IGFT…PLLF, FAIT…TLTP, WLTL…WVFI, LGST…VLGI, FIHP…ALLA, IAGS…IGIV, ILMT…STGV, and IGMV…TPVI.

This sequence belongs to the resistance-nodulation-cell division (RND) (TC 2.A.6) family. MdtB subfamily. In terms of assembly, part of a tripartite efflux system composed of MdtA, MdtB and MdtC. MdtB forms a heteromultimer with MdtC.

Its subcellular location is the cell inner membrane. In terms of biological role, the MdtABC tripartite complex confers resistance against novobiocin and deoxycholate. The protein is Multidrug resistance protein MdtB of Escherichia coli O8 (strain IAI1).